A 398-amino-acid polypeptide reads, in one-letter code: Phospholipase C (398 aa).

The N-terminal stretch at M1 to G28 is a signal peptide. W29, H39, D84, H96, H154, D158, H164, H176, and E180 together coordinate Zn(2+). The Zn-dependent PLC domain maps to W29–T278. A linker region spans residues L275–I283. Residues N284–N398 form the PLAT domain. Ca(2+) contacts are provided by G299, T300, D301, D321, N322, G324, N325, D326, and D364.

The protein belongs to the bacterial zinc-metallophospholipase C family. It depends on Ca(2+) as a cofactor. Zn(2+) serves as cofactor.

It is found in the secreted. It catalyses the reaction a 1,2-diacyl-sn-glycero-3-phosphocholine + H2O = phosphocholine + a 1,2-diacyl-sn-glycerol + H(+). Its function is as follows. Bacterial hemolysins are exotoxins that attack blood cell membranes and cause cell rupture. Binds to eukaryotic membranes where it hydrolyzes phosphatidylcholine, sphingomyelin and phosphatidylethanolamine. The diacylglycerol produced can activate both the arachidonic acid pathway, leading to modulation of the inflammatory response cascade and thrombosis, and protein kinase C, leading to activation of eukaryotic phospholipases and further membrane damage. This enzyme is hemolytic against horse erythrocytes. The sequence is that of Phospholipase C (plc) from Clostridium novyi.